The following is a 109-amino-acid chain: Nucleoid-associated protein BU482 (109 aa).

It belongs to the YbaB/EbfC family. Homodimer.

The protein localises to the cytoplasm. Its subcellular location is the nucleoid. Binds to DNA and alters its conformation. May be involved in regulation of gene expression, nucleoid organization and DNA protection. This is Nucleoid-associated protein BU482 from Buchnera aphidicola subsp. Acyrthosiphon pisum (strain APS) (Acyrthosiphon pisum symbiotic bacterium).